The following is a 91-amino-acid chain: Elongation factor 1-beta (91 aa).

This sequence belongs to the EF-1-beta/EF-1-delta family.

Its function is as follows. Promotes the exchange of GDP for GTP in EF-1-alpha/GDP, thus allowing the regeneration of EF-1-alpha/GTP that could then be used to form the ternary complex EF-1-alpha/GTP/AAtRNA. The chain is Elongation factor 1-beta from Metallosphaera sedula (strain ATCC 51363 / DSM 5348 / JCM 9185 / NBRC 15509 / TH2).